Here is a 421-residue protein sequence, read N- to C-terminus: Aspartokinase (421 aa).

7–10 provides a ligand contact to ATP; sequence KYGG. 25–30 contacts substrate; sequence RIVATK. S41 lines the ATP pocket. Residues 45-49, E74, 125-126, 151-154, and S154 each bind substrate; these read DTTDE, LD, and RGGS. ATP-binding positions include 174–175, 180–185, and K210; these read SD and YTADPR. 2 ACT domains span residues 267 to 343 and 349 to 421; these read VTVL…YDDQ and LVGA…GTGR. Substrate contacts are provided by residues D274, 274–279, 292–294, Q298, 360–361, 374–375, and 381–382; these read DKPGEA, NID, VT, NV, and SE.

Belongs to the aspartokinase family. Tetramer consisting of 2 isoforms Alpha (catalytic and regulation) and of a homodimer of 2 isoforms Beta (regulation).

The enzyme catalyses L-aspartate + ATP = 4-phospho-L-aspartate + ADP. It functions in the pathway amino-acid biosynthesis; L-lysine biosynthesis via DAP pathway; (S)-tetrahydrodipicolinate from L-aspartate: step 1/4. Its pathway is amino-acid biosynthesis; L-methionine biosynthesis via de novo pathway; L-homoserine from L-aspartate: step 1/3. The protein operates within amino-acid biosynthesis; L-threonine biosynthesis; L-threonine from L-aspartate: step 1/5. Functionally, catalyzes the phosphorylation of the beta-carboxyl group of aspartic acid with ATP to yield 4-phospho-L-aspartate, which is involved in the branched biosynthetic pathway leading to the biosynthesis of amino acids lysine, threonine, isoleucine and methionine. The chain is Aspartokinase (lysC) from Corynebacterium efficiens (strain DSM 44549 / YS-314 / AJ 12310 / JCM 11189 / NBRC 100395).